Reading from the N-terminus, the 450-residue chain is tRNA modification GTPase MnmE (450 aa).

Positions 23, 79, and 118 each coordinate (6S)-5-formyl-5,6,7,8-tetrahydrofolate. The TrmE-type G domain maps to G214–G374. Residue N224 participates in K(+) binding. Residues N224–S229, T243–T249, and D268–G271 contribute to the GTP site. Residue S228 coordinates Mg(2+). Positions 243, 245, and 248 each coordinate K(+). Residue T249 participates in Mg(2+) binding. K450 contacts (6S)-5-formyl-5,6,7,8-tetrahydrofolate.

This sequence belongs to the TRAFAC class TrmE-Era-EngA-EngB-Septin-like GTPase superfamily. TrmE GTPase family. As to quaternary structure, homodimer. Heterotetramer of two MnmE and two MnmG subunits. The cofactor is K(+).

It localises to the cytoplasm. In terms of biological role, exhibits a very high intrinsic GTPase hydrolysis rate. Involved in the addition of a carboxymethylaminomethyl (cmnm) group at the wobble position (U34) of certain tRNAs, forming tRNA-cmnm(5)s(2)U34. This Francisella tularensis subsp. tularensis (strain WY96-3418) protein is tRNA modification GTPase MnmE.